The following is a 306-amino-acid chain: tRNA pseudouridine synthase B (306 aa).

Asp48 acts as the Nucleophile in catalysis.

This sequence belongs to the pseudouridine synthase TruB family. Type 1 subfamily.

It carries out the reaction uridine(55) in tRNA = pseudouridine(55) in tRNA. Functionally, responsible for synthesis of pseudouridine from uracil-55 in the psi GC loop of transfer RNAs. The polypeptide is tRNA pseudouridine synthase B (Chromobacterium violaceum (strain ATCC 12472 / DSM 30191 / JCM 1249 / CCUG 213 / NBRC 12614 / NCIMB 9131 / NCTC 9757 / MK)).